The primary structure comprises 464 residues: ATP synthase subunit beta (464 aa).

Position 153–160 (153–160) interacts with ATP; that stretch reads GGAGVGKT.

This sequence belongs to the ATPase alpha/beta chains family. As to quaternary structure, F-type ATPases have 2 components, CF(1) - the catalytic core - and CF(0) - the membrane proton channel. CF(1) has five subunits: alpha(3), beta(3), gamma(1), delta(1), epsilon(1). CF(0) has three main subunits: a(1), b(2) and c(9-12). The alpha and beta chains form an alternating ring which encloses part of the gamma chain. CF(1) is attached to CF(0) by a central stalk formed by the gamma and epsilon chains, while a peripheral stalk is formed by the delta and b chains.

The protein localises to the cell inner membrane. The enzyme catalyses ATP + H2O + 4 H(+)(in) = ADP + phosphate + 5 H(+)(out). Its function is as follows. Produces ATP from ADP in the presence of a proton gradient across the membrane. The catalytic sites are hosted primarily by the beta subunits. The polypeptide is ATP synthase subunit beta (Burkholderia lata (strain ATCC 17760 / DSM 23089 / LMG 22485 / NCIMB 9086 / R18194 / 383)).